A 391-amino-acid polypeptide reads, in one-letter code: Pyruvate dehydrogenase E1 component subunit alpha, mitochondrial (391 aa).

The transit peptide at 1 to 26 directs the protein to the mitochondrion; that stretch reads MALSTSRAINHIMKPLSAAVCATRRL. Positions 92, 118, 119, 167, 169, 198, 199, 200, 227, and 229 each coordinate pyruvate. Residues Tyr-118, Arg-119, Gly-167, Val-169, Asp-198, Gly-199, Ala-200, and Asn-227 each contribute to the thiamine diphosphate site. Asp-198 contributes to the Mg(2+) binding site. The Mg(2+) site is built by Asn-227 and Tyr-229. Thiamine diphosphate is bound at residue His-293. The segment at 294–313 is disordered; it reads SMSDPGSTYRTRDEISGVRQ. Over residues 303–313 the composition is skewed to basic and acidic residues; the sequence is RTRDEISGVRQ.

Tetramer of 2 alpha and 2 beta subunits. It depends on thiamine diphosphate as a cofactor. Mg(2+) is required as a cofactor.

It is found in the mitochondrion matrix. It carries out the reaction N(6)-[(R)-lipoyl]-L-lysyl-[protein] + pyruvate + H(+) = N(6)-[(R)-S(8)-acetyldihydrolipoyl]-L-lysyl-[protein] + CO2. Its activity is regulated as follows. E1 activity is regulated by phosphorylation (inactivation) and dephosphorylation (activation) of the alpha subunit. Functionally, the pyruvate dehydrogenase complex catalyzes the overall conversion of pyruvate to acetyl-CoA and CO(2). It contains multiple copies of three enzymatic components: pyruvate dehydrogenase (E1), dihydrolipoamide acetyltransferase (E2) and lipoamide dehydrogenase (E3). The sequence is that of Pyruvate dehydrogenase E1 component subunit alpha, mitochondrial from Solanum tuberosum (Potato).